The chain runs to 634 residues: Extracellular metalloproteinase mep (634 aa).

The signal sequence occupies residues methionine 1–alanine 18. Positions histidine 19–glutamate 245 are excised as a propeptide. An N-linked (GlcNAc...) asparagine glycan is attached at asparagine 286. Histidine 429 provides a ligand contact to Zn(2+). Glutamate 430 is a catalytic residue. Zn(2+) is bound at residue histidine 433.

Belongs to the peptidase M36 family. It depends on Zn(2+) as a cofactor.

The protein resides in the secreted. Secreted metalloproteinase that allows assimilation of proteinaceous substrates and probably acts as a virulence factor. This is Extracellular metalloproteinase mep (mep) from Aspergillus fumigatus (strain CBS 144.89 / FGSC A1163 / CEA10) (Neosartorya fumigata).